Here is a 206-residue protein sequence, read N- to C-terminus: Cytochrome c oxidase assembly protein CtaG (206 aa).

At 1–12 (MSKKPAGKNSNR) the chain is on the cytoplasmic side. Residues 13-35 (IVAAVCLAFFTGMIGMAYAAVPL) form a helical; Signal-anchor for type II membrane protein membrane-spanning segment. The Periplasmic portion of the chain corresponds to 36 to 206 (YKMFCQATGY…ISDTEANLGG (171 aa)). The tract at residues 184-206 (VASSEPVQGTSKIISDTEANLGG) is disordered. The segment covering 188-206 (EPVQGTSKIISDTEANLGG) has biased composition (polar residues).

The protein belongs to the COX11/CtaG family.

The protein resides in the cell inner membrane. Its function is as follows. Exerts its effect at some terminal stage of cytochrome c oxidase synthesis, probably by being involved in the insertion of the copper B into subunit I. The protein is Cytochrome c oxidase assembly protein CtaG of Mesorhizobium japonicum (strain LMG 29417 / CECT 9101 / MAFF 303099) (Mesorhizobium loti (strain MAFF 303099)).